The primary structure comprises 640 residues: Protelomerase (640 aa).

Arg-275, Lys-300, Arg-383, and His-416 together coordinate DNA. Residue Tyr-425 is the Nucleophile of the active site. Over residues 545-585 the composition is skewed to acidic residues; it reads VDLDDENHDDETLDDDEIEVDESEGEELEEAGDAEEAEVAE. Residues 545 to 605 form a disordered region; it reads VDLDDENHDD…FKAPRDNGDG (61 aa).

The protein belongs to the Caudoviricetes Protelomerase family. Monomer. Homodimer; in presence of DNA.

Converts the circular intermediates produced by the viral replication and carrying a joined telomere site to a linear DNA molecule with covalently closed hairpin ends. The viral circular DNA is cleaved at a palindromic site called telRL thereby generating a linear prophage plasmid with telomeres. Binds covalently to the 3'-phosphoryl of the cleaved strands. The sequence is that of Protelomerase from Klebsiella oxytoca (Bacteriophage phiKO2).